Consider the following 632-residue polypeptide: Arginine--tRNA ligase (632 aa).

The short motif at 129 to 139 is the 'HIGH' region element; that stretch reads ANPVHPLHVGS.

Belongs to the class-I aminoacyl-tRNA synthetase family.

The protein resides in the cytoplasm. The enzyme catalyses tRNA(Arg) + L-arginine + ATP = L-arginyl-tRNA(Arg) + AMP + diphosphate. The sequence is that of Arginine--tRNA ligase from Korarchaeum cryptofilum (strain OPF8).